A 356-amino-acid polypeptide reads, in one-letter code: Histidinol-phosphate aminotransferase 1 (356 aa).

Residue Lys-210 is modified to N6-(pyridoxal phosphate)lysine.

Belongs to the class-II pyridoxal-phosphate-dependent aminotransferase family. Histidinol-phosphate aminotransferase subfamily. In terms of assembly, homodimer. Pyridoxal 5'-phosphate serves as cofactor.

It catalyses the reaction L-histidinol phosphate + 2-oxoglutarate = 3-(imidazol-4-yl)-2-oxopropyl phosphate + L-glutamate. It functions in the pathway amino-acid biosynthesis; L-histidine biosynthesis; L-histidine from 5-phospho-alpha-D-ribose 1-diphosphate: step 7/9. This chain is Histidinol-phosphate aminotransferase 1, found in Hydrogenovibrio crunogenus (strain DSM 25203 / XCL-2) (Thiomicrospira crunogena).